A 606-amino-acid polypeptide reads, in one-letter code: Thrombospondin-related anonymous protein (606 aa).

Positions 1–24 (MKLLGNSKYFFVVLLLCISVFLNG) are cleaved as a signal peptide. Positions 43-228 (DLHILLDGSG…TMIKPFLSKV (186 aa)) constitute a VWFA domain. The region spanning 235–281 (VALCGKWEEWSECSTTCDNGTKIRKRKVLHPNCAGEMTAPCKVRDCP) is the TSP type-1 domain. Residues 301 to 541 (PVEPIEPAEP…SKKQSKSNNG (241 aa)) form a disordered region. Composition is skewed to low complexity over residues 409 to 425 (ENPF…IIAP), 440 to 450 (ELPNNLPESPS), and 459 to 479 (PNDN…IPNK). Basic and acidic residues-rich tracts occupy residues 487–504 (NPYK…RSND) and 516–532 (DKLE…ENKS). The helical transmembrane segment at 544–564 (IAGGIIGGLAIIGCIGVGYNF) threads the bilayer.

In terms of assembly, interacts (via integrin-like A-domain) with Anopheles gambiae saglin/SG1F; the interaction probably promotes sporozoite invasion of salivary gland. Interacts (via integrin-like A-domain) with human AHSG; the interaction promotes sporozoite invasion of hepatocytes and formation of exoerythrocytic forms of parasites in human hepatoma HepG2 cells.

It localises to the cell membrane. Its subcellular location is the cytoplasm. In terms of biological role, promotes parasite ability to invade host hepatocytes. Promotes parasite ability to invade mosquito salivary glands. Required for sporozoite gliding motility. This Plasmodium berghei (strain Anka) protein is Thrombospondin-related anonymous protein.